Reading from the N-terminus, the 490-residue chain is Endoglucanase 13 (490 aa).

The N-terminal stretch at 1-26 (MSQLKNGSSQCLWTSICIVLIVMSMA) is a signal peptide. N-linked (GlcNAc...) asparagine glycosylation is present at N6. Catalysis depends on D86, which acts as the Nucleophile. Catalysis depends on residues H412, D464, and E473.

It belongs to the glycosyl hydrolase 9 (cellulase E) family.

The protein localises to the secreted. It carries out the reaction Endohydrolysis of (1-&gt;4)-beta-D-glucosidic linkages in cellulose, lichenin and cereal beta-D-glucans.. The chain is Endoglucanase 13 from Arabidopsis thaliana (Mouse-ear cress).